The chain runs to 398 residues: MKNKWLSFFSGKVQLELTGRGIERLLNECTRQGIPVFHVKKKKEAVSLYIQLQDVHAFRRVRSKFKCKARFINRKGFPFLLLKSKLNIGFTIGFAIFFILLFLLSNMVWKIDVTGAKPETEHQMRQHLNEIGVKKGRLQFLMMSPEKIQKSLTNGIDNITWVGVDLKGTTIHMKVVEKNEPEKEKYVSPRNIVAKKKATITRMFVQKGQPMAAIHDHVEKGQLLVSGLIGSEDHQQEVASKAEIYGETWYRSEVTVPLETLFNVYTGKVRTKHKLSFGSLAIPIWGMTFKKEELKHPKTEQEKHSLHFLGFKLPVSYVKEQTRESEEALRKYTKEEAVQEGIKLGKQDVEDKIGENGEVKSEKVLHQTVENGKVKLIILYQVIEDIVQTTPIVRETEE.

The helical transmembrane segment at 88-108 (IGFTIGFAIFFILLFLLSNMV) threads the bilayer.

To B.megaterium SpoIV.

The protein localises to the cell membrane. This is an uncharacterized protein from Bacillus subtilis (strain 168).